Consider the following 212-residue polypeptide: uncharacterized protein (212 aa).

Transmembrane regions (helical) follow at residues 20–40 (FLIGFFTEYGYWAVLFVLIIC), 70–90 (LMLLVSMIGVLAGDSCMYWLG), 155–175 (FVLIDFCAAIISVPIWIYLGE), and 192–212 (QIVIYIFIGYLYYSFLEMEKI).

Belongs to the DedA family.

It localises to the cell membrane. This is an uncharacterized protein from Haemophilus influenzae (strain ATCC 51907 / DSM 11121 / KW20 / Rd).